The primary structure comprises 427 residues: Gamma-glutamyl phosphate reductase (427 aa).

Belongs to the gamma-glutamyl phosphate reductase family.

It is found in the cytoplasm. The enzyme catalyses L-glutamate 5-semialdehyde + phosphate + NADP(+) = L-glutamyl 5-phosphate + NADPH + H(+). Its pathway is amino-acid biosynthesis; L-proline biosynthesis; L-glutamate 5-semialdehyde from L-glutamate: step 2/2. Catalyzes the NADPH-dependent reduction of L-glutamate 5-phosphate into L-glutamate 5-semialdehyde and phosphate. The product spontaneously undergoes cyclization to form 1-pyrroline-5-carboxylate. The chain is Gamma-glutamyl phosphate reductase from Rhizobium etli (strain CIAT 652).